Here is a 267-residue protein sequence, read N- to C-terminus: Glutamate racemase (267 aa).

Residues 13-14 (DS) and 45-46 (YS) contribute to the substrate site. Cys77 acts as the Proton donor/acceptor in catalysis. 78 to 79 (NT) is a substrate binding site. Residue Cys188 is the Proton donor/acceptor of the active site. Position 189–190 (189–190 (TH)) interacts with substrate.

This sequence belongs to the aspartate/glutamate racemases family.

It catalyses the reaction L-glutamate = D-glutamate. Its pathway is cell wall biogenesis; peptidoglycan biosynthesis. In terms of biological role, provides the (R)-glutamate required for cell wall biosynthesis. This Histophilus somni (strain 2336) (Haemophilus somnus) protein is Glutamate racemase.